The sequence spans 117 residues: Serine rich endogenous peptide 5 (117 aa).

Positions 1-31 are cleaved as a signal peptide; sequence MATKTSNFVSLRVSLFILLLFISSQVAIADA. The SCOOP motif motif lies at 41–55; the sequence is LQIVRRSRSQRGRQY. Over residues 42 to 51 the composition is skewed to basic residues; it reads QIVRRSRSQR. The interval 42–117 is disordered; sequence QIVRRSRSQR…LPYASSPTST (76 aa). The SxS motif essential for MIK2 binding signature appears at 47–49; that stretch reads SRS. Over residues 60–84 the composition is skewed to pro residues; the sequence is LRVPPPPPPPLPQMPSAATPPPMPQ.

As to quaternary structure, interacts with MIK2 (via extracellular leucine-rich repeat domain); this interaction triggers the formation of complex between MIK2 and the BAK1/SERK3 and SERK4 coreceptors, and subsequent BAK1 activation by phosphorylation.

The protein localises to the cell membrane. Its subcellular location is the secreted. It is found in the extracellular space. It localises to the apoplast. Brassicaceae-specific phytocytokine (plant endogenous peptide released into the apoplast) perceived by MIK2 in a BAK1/SERK3 and SERK4 coreceptors-dependent manner, that modulates various physiological and antimicrobial processes including growth prevention and reactive oxygen species (ROS) response regulation. This Arabidopsis thaliana (Mouse-ear cress) protein is Serine rich endogenous peptide 5.